Consider the following 102-residue polypeptide: Class II hydrophobin 3 (102 aa).

The N-terminal stretch at 1–16 (MQFLAVAALLFTTALA) is a signal peptide. Intrachain disulfides connect Cys-33–Cys-83, Cys-44–Cys-74, Cys-45–Cys-57, and Cys-84–Cys-95.

It belongs to the cerato-ulmin hydrophobin family. Homotetramer. Further self-assembles to form highly ordered films at water-air interfaces through intermolecular interactions. Expressed in the conidia, vegetative growth and induction growth stages.

The protein resides in the secreted. It localises to the cell wall. The protein localises to the cytoplasm. Aerial growth, conidiation, and dispersal of filamentous fungi in the environment rely upon a capability of their secreting small amphipathic proteins called hydrophobins (HPBs) with low sequence identity. Class I can self-assemble into an outermost layer of rodlet bundles on aerial cell surfaces, conferring cellular hydrophobicity that supports fungal growth, development and dispersal; whereas Class II form highly ordered films at water-air interfaces through intermolecular interactions but contribute nothing to the rodlet structure. Hbf3 is a class II hydrophobin that has a role in vegetative growth and asexual development. This is Class II hydrophobin 3 from Hypocrea jecorina (strain QM6a) (Trichoderma reesei).